A 277-amino-acid polypeptide reads, in one-letter code: NADPH-dependent 7-cyano-7-deazaguanine reductase (277 aa).

83–85 (VES) contacts substrate. 85–86 (SK) provides a ligand contact to NADPH. The Thioimide intermediate role is filled by C184. D191 (proton donor) is an active-site residue. Substrate is bound at residue 223-224 (HE). Residue 252–253 (RG) participates in NADPH binding.

This sequence belongs to the GTP cyclohydrolase I family. QueF type 2 subfamily. Homodimer.

It localises to the cytoplasm. It carries out the reaction 7-aminomethyl-7-carbaguanine + 2 NADP(+) = 7-cyano-7-deazaguanine + 2 NADPH + 3 H(+). The protein operates within tRNA modification; tRNA-queuosine biosynthesis. Catalyzes the NADPH-dependent reduction of 7-cyano-7-deazaguanine (preQ0) to 7-aminomethyl-7-deazaguanine (preQ1). This Cupriavidus taiwanensis (strain DSM 17343 / BCRC 17206 / CCUG 44338 / CIP 107171 / LMG 19424 / R1) (Ralstonia taiwanensis (strain LMG 19424)) protein is NADPH-dependent 7-cyano-7-deazaguanine reductase.